The chain runs to 218 residues: Ribonuclease T (218 aa).

The Exonuclease domain maps to 24 to 198 (VIIDVETAGF…YDAERTAELF (175 aa)). Mg(2+) contacts are provided by aspartate 27, glutamate 29, histidine 185, and aspartate 190. Catalysis depends on histidine 185, which acts as the Proton donor/acceptor.

It belongs to the RNase T family. As to quaternary structure, homodimer. The cofactor is Mg(2+).

Trims short 3' overhangs of a variety of RNA species, leaving a one or two nucleotide 3' overhang. Responsible for the end-turnover of tRNA: specifically removes the terminal AMP residue from uncharged tRNA (tRNA-C-C-A). Also appears to be involved in tRNA biosynthesis. The protein is Ribonuclease T of Histophilus somni (strain 129Pt) (Haemophilus somnus).